Consider the following 717-residue polypeptide: Polyribonucleotide nucleotidyltransferase (717 aa).

Residues Asp486 and Asp492 each coordinate Mg(2+). Positions 553 to 612 (PKIVQLQIDIDKISLVIGSTGKTVKAITDEFEVRVQIEQDGRITLFGTDNLKMQKAKAKI) constitute a KH domain. Residues 622–715 (GEIYDGIVKK…KFGKIELELA (94 aa)) enclose the S1 motif domain. The tract at residues 650-681 (SNRSRSRDDRYGSDIRHSRYSNRNSRYGRDNR) is disordered. Positions 654 to 666 (RSRDDRYGSDIRH) are enriched in basic and acidic residues.

It belongs to the polyribonucleotide nucleotidyltransferase family. The cofactor is Mg(2+).

The protein resides in the cytoplasm. The enzyme catalyses RNA(n+1) + phosphate = RNA(n) + a ribonucleoside 5'-diphosphate. In terms of biological role, involved in mRNA degradation. Catalyzes the phosphorolysis of single-stranded polyribonucleotides processively in the 3'- to 5'-direction. This Borrelia duttonii (strain Ly) protein is Polyribonucleotide nucleotidyltransferase.